We begin with the raw amino-acid sequence, 620 residues long: Guanylate-binding protein 3 (620 aa).

The tract at residues 1–304 (MEAPICLVEN…NAINSGTVPC (304 aa)) is GTPase domain (Globular). The GB1/RHD3-type G domain maps to 29–271 (AQPLVVVAIV…FCSYIFTNGK (243 aa)). GTP contacts are provided by residues 39 to 46 (GLYRTGKS), 61 to 63 (LGS), and 91 to 95 (DTEGL). Coiled-coil stretches lie at residues 375–411 (KKLV…SESL) and 477–582 (DGER…TRRK).

The protein belongs to the TRAFAC class dynamin-like GTPase superfamily. GB1/RHD3 GTPase family. GB1 subfamily. As to quaternary structure, heterodimer with other family members, including GBP1, GBP2 and GBP5. Dimerization regulates subcellular location. As to expression, brain, lung, heart, spleen, kidney, liver and intestine.

Its subcellular location is the cytoplasm. The protein localises to the perinuclear region. It localises to the golgi apparatus membrane. The enzyme catalyses GTP + H2O = GDP + phosphate + H(+). Its function is as follows. Interferon (IFN)-inducible GTPase that plays important roles in innate immunity against a diverse range of bacterial, viral and protozoan pathogens. Hydrolyzes GTP very efficiently; GDP rather than GMP is the major reaction product. Following infection, recruited to the pathogen-containing vacuoles or vacuole-escaped bacteria and acts as a positive regulator of inflammasome assembly by promoting the release of inflammasome ligands from bacteria. Acts by promoting lysis of pathogen-containing vacuoles, releasing pathogens into the cytosol. Following pathogen release in the cytosol, promotes recruitment of proteins that mediate bacterial cytolysis, such as Gm12250/Irgb10: this liberates ligands that are detected by inflammasomes, such as lipopolysaccharide (LPS) that activates the non-canonical CASP4/CASP11 inflammasome or double-stranded DNA (dsDNA) that activates the AIM2 inflammasome. May play a role in erythroid differentiation. The sequence is that of Guanylate-binding protein 3 from Mus musculus (Mouse).